The primary structure comprises 189 residues: Interferon alpha-8 (189 aa).

Residues M1 to G23 form the signal peptide. 2 disulfides stabilise this stretch: C24/C122 and C52/C162.

This sequence belongs to the alpha/beta interferon family.

The protein localises to the secreted. In terms of biological role, produced by macrophages, IFN-alpha have antiviral activities. Interferon stimulates the production of two enzymes: a protein kinase and an oligoadenylate synthetase. The protein is Interferon alpha-8 (IFNA8) of Homo sapiens (Human).